A 447-amino-acid polypeptide reads, in one-letter code: Glutamyl-tRNA(Gln) amidotransferase subunit A (447 aa).

Catalysis depends on charge relay system residues Lys50 and Ser125. Ser149 serves as the catalytic Acyl-ester intermediate.

This sequence belongs to the amidase family. GatA subfamily. As to quaternary structure, heterotrimer of A, B and C subunits.

It catalyses the reaction L-glutamyl-tRNA(Gln) + L-glutamine + ATP + H2O = L-glutaminyl-tRNA(Gln) + L-glutamate + ADP + phosphate + H(+). Functionally, allows the formation of correctly charged Gln-tRNA(Gln) through the transamidation of misacylated Glu-tRNA(Gln) in organisms which lack glutaminyl-tRNA synthetase. The reaction takes place in the presence of glutamine and ATP through an activated gamma-phospho-Glu-tRNA(Gln). The protein is Glutamyl-tRNA(Gln) amidotransferase subunit A of Sulfurimonas denitrificans (strain ATCC 33889 / DSM 1251) (Thiomicrospira denitrificans (strain ATCC 33889 / DSM 1251)).